We begin with the raw amino-acid sequence, 414 residues long: Esterase FrsA (414 aa).

Belongs to the FrsA family.

It carries out the reaction a carboxylic ester + H2O = an alcohol + a carboxylate + H(+). In terms of biological role, catalyzes the hydrolysis of esters. This chain is Esterase FrsA, found in Klebsiella pneumoniae subsp. pneumoniae (strain ATCC 700721 / MGH 78578).